A 493-amino-acid chain; its full sequence is Guanosine-5'-triphosphate,3'-diphosphate pyrophosphatase (493 aa).

It belongs to the GppA/Ppx family. GppA subfamily.

The catalysed reaction is guanosine 3'-diphosphate 5'-triphosphate + H2O = guanosine 3',5'-bis(diphosphate) + phosphate + H(+). It participates in purine metabolism; ppGpp biosynthesis; ppGpp from GTP: step 2/2. In terms of biological role, catalyzes the conversion of pppGpp to ppGpp. Guanosine pentaphosphate (pppGpp) is a cytoplasmic signaling molecule which together with ppGpp controls the 'stringent response', an adaptive process that allows bacteria to respond to amino acid starvation, resulting in the coordinated regulation of numerous cellular activities. This is Guanosine-5'-triphosphate,3'-diphosphate pyrophosphatase from Salmonella choleraesuis (strain SC-B67).